The following is a 154-amino-acid chain: 6,7-dimethyl-8-ribityllumazine synthase (154 aa).

5-amino-6-(D-ribitylamino)uracil contacts are provided by residues Phe-22, 56-58, and 80-82; these read AFE and TVI. 85–86 contributes to the (2S)-2-hydroxy-3-oxobutyl phosphate binding site; it reads AT. His-88 serves as the catalytic Proton donor. Phe-113 serves as a coordination point for 5-amino-6-(D-ribitylamino)uracil. Arg-127 contributes to the (2S)-2-hydroxy-3-oxobutyl phosphate binding site.

Belongs to the DMRL synthase family. As to quaternary structure, forms an icosahedral capsid composed of 60 subunits, arranged as a dodecamer of pentamers.

The catalysed reaction is (2S)-2-hydroxy-3-oxobutyl phosphate + 5-amino-6-(D-ribitylamino)uracil = 6,7-dimethyl-8-(1-D-ribityl)lumazine + phosphate + 2 H2O + H(+). It participates in cofactor biosynthesis; riboflavin biosynthesis; riboflavin from 2-hydroxy-3-oxobutyl phosphate and 5-amino-6-(D-ribitylamino)uracil: step 1/2. Catalyzes the formation of 6,7-dimethyl-8-ribityllumazine by condensation of 5-amino-6-(D-ribitylamino)uracil with 3,4-dihydroxy-2-butanone 4-phosphate. This is the penultimate step in the biosynthesis of riboflavin. The polypeptide is 6,7-dimethyl-8-ribityllumazine synthase (Bacillus amyloliquefaciens (Bacillus velezensis)).